The primary structure comprises 216 residues: Pyrrolidone-carboxylate peptidase (216 aa).

Active-site residues include glutamate 80, cysteine 143, and histidine 168.

The protein belongs to the peptidase C15 family. In terms of assembly, homotetramer.

The protein localises to the cytoplasm. The catalysed reaction is Release of an N-terminal pyroglutamyl group from a polypeptide, the second amino acid generally not being Pro.. In terms of biological role, removes 5-oxoproline from various penultimate amino acid residues except L-proline. This Cupriavidus necator (strain ATCC 17699 / DSM 428 / KCTC 22496 / NCIMB 10442 / H16 / Stanier 337) (Ralstonia eutropha) protein is Pyrrolidone-carboxylate peptidase.